Reading from the N-terminus, the 568-residue chain is Urease subunit alpha (568 aa).

The 440-residue stretch at 129 to 568 folds into the Urease domain; sequence GAIDSHIHFI…LPMAQRYFLF (440 aa). Residues H134, H136, and K217 each contribute to the Ni(2+) site. K217 carries the N6-carboxylysine modification. H219 provides a ligand contact to substrate. The Ni(2+) site is built by H246 and H272. The active-site Proton donor is the H320. D360 provides a ligand contact to Ni(2+).

It belongs to the metallo-dependent hydrolases superfamily. Urease alpha subunit family. In terms of assembly, heterotrimer of UreA (gamma), UreB (beta) and UreC (alpha) subunits. Three heterotrimers associate to form the active enzyme. Requires Ni cation as cofactor. Post-translationally, carboxylation allows a single lysine to coordinate two nickel ions.

It localises to the cytoplasm. The catalysed reaction is urea + 2 H2O + H(+) = hydrogencarbonate + 2 NH4(+). The protein operates within nitrogen metabolism; urea degradation; CO(2) and NH(3) from urea (urease route): step 1/1. This is Urease subunit alpha from Saccharophagus degradans (strain 2-40 / ATCC 43961 / DSM 17024).